Reading from the N-terminus, the 1404-residue chain is DNA-directed RNA polymerase subunit beta' (1404 aa).

4 residues coordinate Zn(2+): Cys-70, Cys-72, Cys-85, and Cys-88. Asp-460, Asp-462, and Asp-464 together coordinate Mg(2+). The Zn(2+) site is built by Cys-814, Cys-888, Cys-895, and Cys-898.

The protein belongs to the RNA polymerase beta' chain family. As to quaternary structure, the RNAP catalytic core consists of 2 alpha, 1 beta, 1 beta' and 1 omega subunit. When a sigma factor is associated with the core the holoenzyme is formed, which can initiate transcription. Mg(2+) serves as cofactor. Zn(2+) is required as a cofactor.

It carries out the reaction RNA(n) + a ribonucleoside 5'-triphosphate = RNA(n+1) + diphosphate. In terms of biological role, DNA-dependent RNA polymerase catalyzes the transcription of DNA into RNA using the four ribonucleoside triphosphates as substrates. The sequence is that of DNA-directed RNA polymerase subunit beta' from Shewanella halifaxensis (strain HAW-EB4).